We begin with the raw amino-acid sequence, 500 residues long: Cysteine--tRNA ligase (500 aa).

Cys29 is a Zn(2+) binding site. The short motif at Val31–His41 is the 'HIGH' region element. Positions 213, 238, and 242 each coordinate Zn(2+). The 'KMSKS' region motif lies at Lys270 to Ser274. Lys273 contacts ATP.

This sequence belongs to the class-I aminoacyl-tRNA synthetase family. Monomer. The cofactor is Zn(2+).

Its subcellular location is the cytoplasm. It catalyses the reaction tRNA(Cys) + L-cysteine + ATP = L-cysteinyl-tRNA(Cys) + AMP + diphosphate. The sequence is that of Cysteine--tRNA ligase from Prochlorococcus marinus (strain NATL2A).